The following is a 333-amino-acid chain: NADH dehydrogenase (ubiquinone) complex I, assembly factor 6 (333 aa).

Residues 1-44 (MAASTLGSAWGPLRLGVPGLCRRRPPRGLWARARRLSEPVASGR) constitute a mitochondrion transit peptide.

This sequence belongs to the NDUFAF6 family.

The protein localises to the mitochondrion inner membrane. In terms of biological role, involved in the assembly of mitochondrial NADH:ubiquinone oxidoreductase complex (complex I) at early stages. May play a role in the biogenesis of complex I subunit MT-ND1. This Bos taurus (Bovine) protein is NADH dehydrogenase (ubiquinone) complex I, assembly factor 6 (NDUFAF6).